Reading from the N-terminus, the 281-residue chain is Urease accessory protein UreD 2 (281 aa).

It belongs to the UreD family. UreD, UreF and UreG form a complex that acts as a GTP-hydrolysis-dependent molecular chaperone, activating the urease apoprotein by helping to assemble the nickel containing metallocenter of UreC. The UreE protein probably delivers the nickel.

Its subcellular location is the cytoplasm. Functionally, required for maturation of urease via the functional incorporation of the urease nickel metallocenter. The polypeptide is Urease accessory protein UreD 2 (Pseudomonas syringae pv. tomato (strain ATCC BAA-871 / DC3000)).